The primary structure comprises 168 residues: MRWIGIDPGLCTTGFGIIDVDGQKLTYVASGTIESGDPAKRLGALYAGLKEVLETYRPESAAIEEVFLNVNPRSTLMLGQARGAVIAALVSEKLPVAEYSALRVKQAIVGTGRAAKPQVQEMVKRLLRLNRAPGTDASDALGVAICAAHHAQIPNVFSTTLTPKKRSK.

Active-site residues include Asp7, Glu64, and Asp136. Positions 7, 64, and 136 each coordinate Mg(2+).

The protein belongs to the RuvC family. As to quaternary structure, homodimer which binds Holliday junction (HJ) DNA. The HJ becomes 2-fold symmetrical on binding to RuvC with unstacked arms; it has a different conformation from HJ DNA in complex with RuvA. In the full resolvosome a probable DNA-RuvA(4)-RuvB(12)-RuvC(2) complex forms which resolves the HJ. The cofactor is Mg(2+).

The protein resides in the cytoplasm. The catalysed reaction is Endonucleolytic cleavage at a junction such as a reciprocal single-stranded crossover between two homologous DNA duplexes (Holliday junction).. In terms of biological role, the RuvA-RuvB-RuvC complex processes Holliday junction (HJ) DNA during genetic recombination and DNA repair. Endonuclease that resolves HJ intermediates. Cleaves cruciform DNA by making single-stranded nicks across the HJ at symmetrical positions within the homologous arms, yielding a 5'-phosphate and a 3'-hydroxyl group; requires a central core of homology in the junction. The consensus cleavage sequence is 5'-(A/T)TT(C/G)-3'. Cleavage occurs on the 3'-side of the TT dinucleotide at the point of strand exchange. HJ branch migration catalyzed by RuvA-RuvB allows RuvC to scan DNA until it finds its consensus sequence, where it cleaves and resolves the cruciform DNA. The protein is Crossover junction endodeoxyribonuclease RuvC of Polynucleobacter necessarius subsp. necessarius (strain STIR1).